A 267-amino-acid chain; its full sequence is Apolipoprotein A-I (267 aa).

Positions 1–18 are cleaved as a signal peptide; the sequence is MKAAVLTLAVLFLTGSQA. Tandem repeats lie at residues 68–89 and 90–111. Positions 68–267 are 10 X approximate tandem repeats; that stretch reads LKLLDNWDSL…EEYAKKLSSQ (200 aa). Position 110 is a methionine sulfoxide (methionine 110). The stretch at 112 to 122 is one 3; half-length repeat; it reads KDLEEVKAKVQ. 5 tandem repeats follow at residues 123 to 144, 145 to 166, 167 to 188, 189 to 210, and 211 to 232. One copy of the 9; half-length repeat lies at 233–243; it reads PALEDLRQGLL. Repeat unit 10 spans residues 244 to 267; it reads PVLESFKVSFLSALEEYAKKLSSQ.

It belongs to the apolipoprotein A1/A4/E family. In terms of assembly, homodimer. Interacts with APOA1BP and CLU. Component of a sperm activating protein complex (SPAP), consisting of APOA1, an immunoglobulin heavy chain, an immunoglobulin light chain and albumin. Interacts with NDRG1. Interacts with SCGB3A2. Interacts with NAXE and YJEFN3. Post-translationally, glycosylated. Palmitoylated. In terms of processing, phosphorylation sites are present in the extracellular medium.

It is found in the secreted. In terms of biological role, participates in the reverse transport of cholesterol from tissues to the liver for excretion by promoting cholesterol efflux from tissues and by acting as a cofactor for the lecithin cholesterol acyltransferase (LCAT). As part of the SPAP complex, activates spermatozoa motility. The sequence is that of Apolipoprotein A-I (APOA1) from Cebus imitator (Panamanian white-faced capuchin).